Reading from the N-terminus, the 208-residue chain is Holliday junction branch migration complex subunit RuvA (208 aa).

The interval 1 to 64 is domain I; that stretch reads MIGRLHGTVA…DDGQALYGFA (64 aa). The domain II stretch occupies residues 65–143; it reads SRAERDLFRV…GLLPAASGGV (79 aa). Positions 139-162 are disordered; the sequence is ASGGVPARTGSGEQLDAPAGPQGS. The tract at residues 144-157 is flexible linker; the sequence is PARTGSGEQLDAPA. The segment at 158–208 is domain III; the sequence is GPQGSREDAVSALVALGYKPAEAGRLVNAVPGANDLPSEELIRRALQAAVR.

Belongs to the RuvA family. Homotetramer. Forms an RuvA(8)-RuvB(12)-Holliday junction (HJ) complex. HJ DNA is sandwiched between 2 RuvA tetramers; dsDNA enters through RuvA and exits via RuvB. An RuvB hexamer assembles on each DNA strand where it exits the tetramer. Each RuvB hexamer is contacted by two RuvA subunits (via domain III) on 2 adjacent RuvB subunits; this complex drives branch migration. In the full resolvosome a probable DNA-RuvA(4)-RuvB(12)-RuvC(2) complex forms which resolves the HJ.

Its subcellular location is the cytoplasm. Functionally, the RuvA-RuvB-RuvC complex processes Holliday junction (HJ) DNA during genetic recombination and DNA repair, while the RuvA-RuvB complex plays an important role in the rescue of blocked DNA replication forks via replication fork reversal (RFR). RuvA specifically binds to HJ cruciform DNA, conferring on it an open structure. The RuvB hexamer acts as an ATP-dependent pump, pulling dsDNA into and through the RuvAB complex. HJ branch migration allows RuvC to scan DNA until it finds its consensus sequence, where it cleaves and resolves the cruciform DNA. This Alkalilimnicola ehrlichii (strain ATCC BAA-1101 / DSM 17681 / MLHE-1) protein is Holliday junction branch migration complex subunit RuvA.